Reading from the N-terminus, the 137-residue chain is MRILGLDVGTKTVGVAISDEMGWTAQGLETIKINEEREIFGFDRVSELVKQYNVDKIVVGLPKNMNGTIGPRGEACQRYAESLRELLQLEVILWDERLSTMAAERLLISADVSRKKRKQVVDKMAAVVILQGYLDSK.

The protein belongs to the YqgF nuclease family.

The protein localises to the cytoplasm. Its function is as follows. Could be a nuclease involved in processing of the 5'-end of pre-16S rRNA. The protein is Putative pre-16S rRNA nuclease of Bacillus cytotoxicus (strain DSM 22905 / CIP 110041 / 391-98 / NVH 391-98).